We begin with the raw amino-acid sequence, 402 residues long: Tyrosine-protein kinase transforming protein ros (402 aa).

A Protein kinase domain is found at 98–377; sequence LNLHKLLGSG…KLQEIRHSPL (280 aa). ATP-binding positions include 104–112 and K133; that span reads LGSGAFGEV. The active-site Proton acceptor is the D232. Y268 carries the phosphotyrosine; by autocatalysis modification.

The protein belongs to the protein kinase superfamily. Tyr protein kinase family. Insulin receptor subfamily.

It carries out the reaction L-tyrosyl-[protein] + ATP = O-phospho-L-tyrosyl-[protein] + ADP + H(+). This Galliformes (UR2SV) protein is Tyrosine-protein kinase transforming protein ros (V-ROS).